The sequence spans 419 residues: Isocitrate dehydrogenase [NADP] 1 (419 aa).

Threonine 105 provides a ligand contact to NADP(+). Residues serine 114, asparagine 116, arginine 120, arginine 130, and arginine 154 each contribute to the D-threo-isocitrate site. Mg(2+) is bound at residue aspartate 308. NADP(+) contacts are provided by residues 340 to 346 (HGTAPKY), asparagine 353, tyrosine 392, and arginine 396.

Belongs to the isocitrate and isopropylmalate dehydrogenases family. In terms of assembly, homodimer. It depends on Mg(2+) as a cofactor. Mn(2+) is required as a cofactor.

The catalysed reaction is D-threo-isocitrate + NADP(+) = 2-oxoglutarate + CO2 + NADPH. IDH activity is not significantly affected by monovalent cations. The combined addition of Mn(2+) and another divalent cation results in the decrease of the activity. Functionally, catalyzes the oxidative decarboxylation of isocitrate to 2-oxoglutarate and carbon dioxide with the concomitant reduction of NADP(+). Cannot use NAD(+). This chain is Isocitrate dehydrogenase [NADP] 1, found in Psychrobacter sp. (strain 13A).